A 201-amino-acid chain; its full sequence is Lipoprotein signal peptidase (201 aa).

The next 2 membrane-spanning stretches (helical) occupy residues 73-93 (SNAI…YLMI) and 97-117 (TIGS…NLID). Active-site residues include aspartate 126 and aspartate 144. A helical transmembrane segment spans residues 135–155 (YSFPVFNLADCFITIGVIILI).

The protein belongs to the peptidase A8 family.

It localises to the cell inner membrane. The enzyme catalyses Release of signal peptides from bacterial membrane prolipoproteins. Hydrolyzes -Xaa-Yaa-Zaa-|-(S,diacylglyceryl)Cys-, in which Xaa is hydrophobic (preferably Leu), and Yaa (Ala or Ser) and Zaa (Gly or Ala) have small, neutral side chains.. It participates in protein modification; lipoprotein biosynthesis (signal peptide cleavage). Functionally, this protein specifically catalyzes the removal of signal peptides from prolipoproteins. This Rickettsia africae (strain ESF-5) protein is Lipoprotein signal peptidase.